The primary structure comprises 274 residues: Elongation factor Ts (274 aa).

Residues 79–82 are involved in Mg(2+) ion dislocation from EF-Tu; the sequence is TDFV.

This sequence belongs to the EF-Ts family.

Its subcellular location is the cytoplasm. In terms of biological role, associates with the EF-Tu.GDP complex and induces the exchange of GDP to GTP. It remains bound to the aminoacyl-tRNA.EF-Tu.GTP complex up to the GTP hydrolysis stage on the ribosome. The protein is Elongation factor Ts of Aster yellows witches'-broom phytoplasma (strain AYWB).